The sequence spans 130 residues: Small ribosomal subunit protein uS9 (130 aa).

Belongs to the universal ribosomal protein uS9 family.

This chain is Small ribosomal subunit protein uS9, found in Verminephrobacter eiseniae (strain EF01-2).